The chain runs to 609 residues: Dihydroxy-acid dehydratase (609 aa).

Mg(2+) is bound at residue Asp81. Residue Cys122 coordinates [2Fe-2S] cluster. Mg(2+)-binding residues include Asp123 and Lys124. Lys124 is subject to N6-carboxylysine. Cys195 serves as a coordination point for [2Fe-2S] cluster. Residue Glu491 participates in Mg(2+) binding. Catalysis depends on Ser517, which acts as the Proton acceptor.

Belongs to the IlvD/Edd family. In terms of assembly, homodimer. [2Fe-2S] cluster serves as cofactor. The cofactor is Mg(2+).

It carries out the reaction (2R)-2,3-dihydroxy-3-methylbutanoate = 3-methyl-2-oxobutanoate + H2O. The catalysed reaction is (2R,3R)-2,3-dihydroxy-3-methylpentanoate = (S)-3-methyl-2-oxopentanoate + H2O. It participates in amino-acid biosynthesis; L-isoleucine biosynthesis; L-isoleucine from 2-oxobutanoate: step 3/4. The protein operates within amino-acid biosynthesis; L-valine biosynthesis; L-valine from pyruvate: step 3/4. Functionally, functions in the biosynthesis of branched-chain amino acids. Catalyzes the dehydration of (2R,3R)-2,3-dihydroxy-3-methylpentanoate (2,3-dihydroxy-3-methylvalerate) into 2-oxo-3-methylpentanoate (2-oxo-3-methylvalerate) and of (2R)-2,3-dihydroxy-3-methylbutanoate (2,3-dihydroxyisovalerate) into 2-oxo-3-methylbutanoate (2-oxoisovalerate), the penultimate precursor to L-isoleucine and L-valine, respectively. The protein is Dihydroxy-acid dehydratase of Acinetobacter baumannii (strain ATCC 17978 / DSM 105126 / CIP 53.77 / LMG 1025 / NCDC KC755 / 5377).